The following is a 427-amino-acid chain: Kallistatin (427 aa).

A signal peptide spans 1 to 20 (MHLIDYLLLLLVGLLALSHG). 3 N-linked (GlcNAc...) asparagine glycosylation sites follow: N33, N108, and N157. The N-linked (GlcNAc...) (complex) asparagine glycan is linked to N238.

This sequence belongs to the serpin family. As to quaternary structure, monomer and some homodimers. Post-translationally, the N-terminus is blocked. In terms of tissue distribution, expressed by the liver and secreted in plasma.

It is found in the secreted. In terms of biological role, inhibits human amidolytic and kininogenase activities of tissue kallikrein. Inhibition is achieved by formation of an equimolar, heat- and SDS-stable complex between the inhibitor and the enzyme, and generation of a small C-terminal fragment of the inhibitor due to cleavage at the reactive site by tissue kallikrein. The polypeptide is Kallistatin (SERPINA4) (Homo sapiens (Human)).